Reading from the N-terminus, the 199-residue chain is N-(5'-phosphoribosyl)anthranilate isomerase (199 aa).

It belongs to the TrpF family.

The enzyme catalyses N-(5-phospho-beta-D-ribosyl)anthranilate = 1-(2-carboxyphenylamino)-1-deoxy-D-ribulose 5-phosphate. It participates in amino-acid biosynthesis; L-tryptophan biosynthesis; L-tryptophan from chorismate: step 3/5. The protein is N-(5'-phosphoribosyl)anthranilate isomerase of Campylobacter jejuni subsp. jejuni serotype O:6 (strain 81116 / NCTC 11828).